A 236-amino-acid polypeptide reads, in one-letter code: Phosphoribosylaminoimidazole-succinocarboxamide synthase (236 aa).

It belongs to the SAICAR synthetase family.

The catalysed reaction is 5-amino-1-(5-phospho-D-ribosyl)imidazole-4-carboxylate + L-aspartate + ATP = (2S)-2-[5-amino-1-(5-phospho-beta-D-ribosyl)imidazole-4-carboxamido]succinate + ADP + phosphate + 2 H(+). It participates in purine metabolism; IMP biosynthesis via de novo pathway; 5-amino-1-(5-phospho-D-ribosyl)imidazole-4-carboxamide from 5-amino-1-(5-phospho-D-ribosyl)imidazole-4-carboxylate: step 1/2. The sequence is that of Phosphoribosylaminoimidazole-succinocarboxamide synthase from Rickettsia africae (strain ESF-5).